Reading from the N-terminus, the 483-residue chain is Glutamyl-tRNA(Gln) amidotransferase subunit A (483 aa).

Catalysis depends on charge relay system residues K76 and S151. S175 acts as the Acyl-ester intermediate in catalysis.

This sequence belongs to the amidase family. GatA subfamily. Heterotrimer of A, B and C subunits.

It carries out the reaction L-glutamyl-tRNA(Gln) + L-glutamine + ATP + H2O = L-glutaminyl-tRNA(Gln) + L-glutamate + ADP + phosphate + H(+). Functionally, allows the formation of correctly charged Gln-tRNA(Gln) through the transamidation of misacylated Glu-tRNA(Gln) in organisms which lack glutaminyl-tRNA synthetase. The reaction takes place in the presence of glutamine and ATP through an activated gamma-phospho-Glu-tRNA(Gln). In Nitrosospira multiformis (strain ATCC 25196 / NCIMB 11849 / C 71), this protein is Glutamyl-tRNA(Gln) amidotransferase subunit A.